Reading from the N-terminus, the 557-residue chain is Anthrax toxin receptor-like (557 aa).

The N-terminal stretch at 1-25 (MRSHGRWGPCFLLFLLLLPPPLFRA) is a signal peptide. The Extracellular portion of the chain corresponds to 26–345 (GSLRYHGPGW…KSNVSVTSST (320 aa)). The VWFA domain occupies 74 to 244 (DLYFILDKSG…KAMRDTVDAL (171 aa)). The a divalent metal cation site is built by serine 82, serine 84, and threonine 148. The helical transmembrane segment at 346–366 (CGIFSNWLYFLLPLLLLPLLL) threads the bilayer. Residues 367 to 557 (CCLWRLCRKK…PTSKAPNTQD (191 aa)) lie on the Cytoplasmic side of the membrane. Disordered regions lie at residues 380 to 411 (EPPP…LPPP) and 497 to 557 (ESPS…NTQD). The span at 386–395 (KPEKEPEQEK) shows a compositional bias: basic and acidic residues. Residues 396-411 (PPPPPPPSPPPPLPPP) are compositionally biased toward pro residues. Over residues 534–557 (GTLQNPLCPSLPRSPTSKAPNTQD) the composition is skewed to polar residues.

It belongs to the ATR family.

It localises to the membrane. The polypeptide is Anthrax toxin receptor-like (ANTXRL) (Macaca fascicularis (Crab-eating macaque)).